The chain runs to 392 residues: DNA-directed RNA polymerase subunit Rpo1C (392 aa).

The protein belongs to the RNA polymerase beta' chain family. Part of the RNA polymerase complex.

The protein localises to the cytoplasm. The catalysed reaction is RNA(n) + a ribonucleoside 5'-triphosphate = RNA(n+1) + diphosphate. DNA-dependent RNA polymerase (RNAP) catalyzes the transcription of DNA into RNA using the four ribonucleoside triphosphates as substrates. Forms part of the jaw domain. In Sulfurisphaera tokodaii (strain DSM 16993 / JCM 10545 / NBRC 100140 / 7) (Sulfolobus tokodaii), this protein is DNA-directed RNA polymerase subunit Rpo1C.